The chain runs to 141 residues: uncharacterized protein (141 aa).

A run of 2 helical transmembrane segments spans residues 12 to 32 (GIAGCGAGGVVMAIASVTLVT) and 35 to 55 (PGRVLTGVAALGLILFASATW).

The protein resides in the cell membrane. This is an uncharacterized protein from Mycobacterium tuberculosis (strain CDC 1551 / Oshkosh).